A 178-amino-acid chain; its full sequence is Large ribosomal subunit protein uL6 (178 aa).

Belongs to the universal ribosomal protein uL6 family. Part of the 50S ribosomal subunit.

Functionally, this protein binds to the 23S rRNA, and is important in its secondary structure. It is located near the subunit interface in the base of the L7/L12 stalk, and near the tRNA binding site of the peptidyltransferase center. This is Large ribosomal subunit protein uL6 from Francisella tularensis subsp. tularensis (strain FSC 198).